Consider the following 491-residue polypeptide: Aspartyl/glutamyl-tRNA(Asn/Gln) amidotransferase subunit B (491 aa).

It belongs to the GatB/GatE family. GatB subfamily. In terms of assembly, heterotrimer of A, B and C subunits.

The enzyme catalyses L-glutamyl-tRNA(Gln) + L-glutamine + ATP + H2O = L-glutaminyl-tRNA(Gln) + L-glutamate + ADP + phosphate + H(+). The catalysed reaction is L-aspartyl-tRNA(Asn) + L-glutamine + ATP + H2O = L-asparaginyl-tRNA(Asn) + L-glutamate + ADP + phosphate + 2 H(+). In terms of biological role, allows the formation of correctly charged Asn-tRNA(Asn) or Gln-tRNA(Gln) through the transamidation of misacylated Asp-tRNA(Asn) or Glu-tRNA(Gln) in organisms which lack either or both of asparaginyl-tRNA or glutaminyl-tRNA synthetases. The reaction takes place in the presence of glutamine and ATP through an activated phospho-Asp-tRNA(Asn) or phospho-Glu-tRNA(Gln). The protein is Aspartyl/glutamyl-tRNA(Asn/Gln) amidotransferase subunit B of Nostoc punctiforme (strain ATCC 29133 / PCC 73102).